Here is a 72-residue protein sequence, read N- to C-terminus: Translation initiation factor IF-1 (72 aa).

The S1-like domain occupies 1-72; it reads MSKQDVIEFD…TKGRITYRGK (72 aa).

This sequence belongs to the IF-1 family. As to quaternary structure, component of the 30S ribosomal translation pre-initiation complex which assembles on the 30S ribosome in the order IF-2 and IF-3, IF-1 and N-formylmethionyl-tRNA(fMet); mRNA recruitment can occur at any time during PIC assembly.

The protein resides in the cytoplasm. Functionally, one of the essential components for the initiation of protein synthesis. Stabilizes the binding of IF-2 and IF-3 on the 30S subunit to which N-formylmethionyl-tRNA(fMet) subsequently binds. Helps modulate mRNA selection, yielding the 30S pre-initiation complex (PIC). Upon addition of the 50S ribosomal subunit IF-1, IF-2 and IF-3 are released leaving the mature 70S translation initiation complex. The polypeptide is Translation initiation factor IF-1 (Hydrogenovibrio crunogenus (strain DSM 25203 / XCL-2) (Thiomicrospira crunogena)).